Consider the following 1832-residue polypeptide: Zinc finger protein 646 (1832 aa).

8 C2H2-type zinc fingers span residues 8–31 (LSCS…ELLH), 48–70 (YRCQ…RRTH), 75–97 (FPCT…MRTH), 239–261 (YKCS…RQSH), 266–288 (YPCA…SRLH), 294–316 (YHCP…QQSH), 374–396 (FRCG…RKSH), and 401–424 (YPCS…RAHH). The interval 26 to 47 (HRELLHPSPNQDSEEADSIPRP) is disordered. Over residues 94–108 (MRTHAPEGRRRHRPP) the composition is skewed to basic residues. The interval 94–200 (MRTHAPEGRR…TNSARAPPLP (107 aa)) is disordered. Basic and acidic residues predominate over residues 313–329 (QQSHEGERQEPRWEEKG). Residues 313-346 (QQSHEGERQEPRWEEKGMPTTNGHTDESSQDQLP) are disordered. Lys451 participates in a covalent cross-link: Glycyl lysine isopeptide (Lys-Gly) (interchain with G-Cter in SUMO2). C2H2-type zinc fingers lie at residues 465–487 (YKCS…RHSH) and 492–514 (YQCS…VRVH). Residues Lys534 and Lys557 each participate in a glycyl lysine isopeptide (Lys-Gly) (interchain with G-Cter in SUMO2) cross-link. The segment at 575-597 (HICSICGLLFEDAESLERHGLTH) adopts a C2H2-type 11 zinc-finger fold. Position 612 is a phosphoserine (Ser612). 2 C2H2-type zinc fingers span residues 617–639 (FACR…RQTH) and 644–666 (FSCG…LRRH). The segment at 660–810 (KNHLRRHSRR…QPNSSSHSAN (151 aa)) is disordered. The span at 661 to 678 (NHLRRHSRRRSRRHRKRA) shows a compositional bias: basic residues. Lys688 is covalently cross-linked (Glycyl lysine isopeptide (Lys-Gly) (interchain with G-Cter in SUMO2)). A compositionally biased stretch (basic and acidic residues) spans 735-767 (EGDKCGLERDETHFQGDKESGGTGEGLERKDAS). Residues 798–810 (ATGQPNSSSHSAN) are compositionally biased toward polar residues. C2H2-type zinc fingers lie at residues 821–843 (HTCS…RPCH), 848–870 (YQCS…FQNH), and 881–904 (FLCC…RQAH). The tract at residues 901-931 (RQAHSSSGMTEGSEEEGEEEGVAEAAPARSP) is disordered. Positions 912-922 (GSEEEGEEEGV) are enriched in acidic residues. The C2H2-type 17; degenerate zinc finger occupies 958–980 (HICGCCGQTYDDLGSLERHHQSQ). C2H2-type zinc fingers lie at residues 1052–1074 (FRCN…RKIH) and 1079–1101 (FLCP…LRNH). A disordered region spans residues 1103-1148 (RCKGSEPQVGPIPEAAGSSELQVGPIPEGGSNKPQHMAEEGPGQAE). Glycyl lysine isopeptide (Lys-Gly) (interchain with G-Cter in SUMO2) cross-links involve residues Lys1157, Lys1168, and Lys1178. C2H2-type zinc fingers lie at residues 1203 to 1225 (FSCE…RQSH), 1230 to 1252 (FGCQ…RRIH), 1258 to 1280 (FRCS…QRVH), 1299 to 1321 (FRCG…RRSH), 1326 to 1348 (YSCP…QRLH), and 1364 to 1386 (VRCA…LREH). The disordered stretch occupies residues 1274-1294 (ASHQRVHMERRGGGGTRKATR). Disordered stretches follow at residues 1377–1481 (GSLE…WVPQ) and 1509–1529 (TLSH…QPGS). Positions 1378-1393 (SLERHLREHEETEREP) are enriched in basic and acidic residues. Residues 1406–1417 (SEANLTGSQGLE) show a composition bias toward polar residues. Basic and acidic residues predominate over residues 1427-1438 (PHLEDGVPRPGE). Gly residues predominate over residues 1460–1475 (GKAGGWPVGGGLGNHS). 6 C2H2-type zinc fingers span residues 1557–1579 (HYCL…SHNH), 1585–1607 (FACP…LQAH), 1677–1699 (FRCT…QKAH), 1704–1726 (YPCS…SRTH), 1732–1754 (HCCS…GRVH), and 1761–1783 (FTCP…QQQH). A disordered region spans residues 1606–1672 (AHARGHSQVP…QAVTSMAAED (67 aa)). The tract at residues 1781–1832 (QQHQEEWTVAGSGAPVAPVTGRGDLPLPPPPTPTTPLLDPSPQWPADLSFSL) is disordered.

This sequence belongs to the krueppel C2H2-type zinc-finger protein family.

It localises to the nucleus. May be involved in transcriptional regulation. This is Zinc finger protein 646 from Homo sapiens (Human).